The sequence spans 462 residues: Cytochrome P450 20A1 (462 aa).

Residues 4–24 traverse the membrane as a helical segment; the sequence is FAIFAVTFLLALVGAVLYLYP. Cysteine 409 is a binding site for heme.

Belongs to the cytochrome P450 family. Requires heme as cofactor.

It is found in the membrane. The polypeptide is Cytochrome P450 20A1 (Cyp20a1) (Mus musculus (Mouse)).